Here is a 36-residue protein sequence, read N- to C-terminus: U14-myrmicitoxin-Tb1a (36 aa).

Positions 1–23 (MKIIKLITIFTMMATLMXXVANG) are cleaved as a signal peptide. Positions 24-25 (EP) are excised as a propeptide. A Glutamine amide modification is found at Q35.

In terms of tissue distribution, expressed by the venom gland.

It localises to the secreted. Venom protein with unknown function. Does not induce paralysis when a high dose is administered by intrathoracic injection into the blowfly Lucilia caesar. This chain is U14-myrmicitoxin-Tb1a, found in Tetramorium bicarinatum (Tramp ant).